A 370-amino-acid polypeptide reads, in one-letter code: Sodium-dependent organic anion transporter (370 aa).

Positions 1 to 24 (MSADCEGNSTCPANSTEEDPPVGM) are disordered. Residues 1–32 (MSADCEGNSTCPANSTEEDPPVGMEGQGSLKL) lie on the Extracellular side of the membrane. Residues asparagine 8 and asparagine 14 are each glycosylated (N-linked (GlcNAc...) asparagine). Residues 33–53 (VFTVLSAVMVGLVMFSFGCSV) form a helical membrane-spanning segment. Residues 54–67 (ESRKLWLHLRRPWG) are Cytoplasmic-facing. A helical transmembrane segment spans residues 68–88 (IAVGLLCQFGLMPLTAYLLAI). The Extracellular segment spans residues 89 to 97 (GFGLKPFQA). Residues 98 to 118 (IAVLIMGSCPGGTVSNVLTFW) traverse the membrane as a helical segment. Residues 119 to 126 (VDGDMDLS) are Cytoplasmic-facing. A helical membrane pass occupies residues 127–147 (ISMTTCSTVAALGMMPLCLYV). Over 148–159 (YTRSWTLPQSLT) the chain is Extracellular. A helical transmembrane segment spans residues 160–180 (IPYQSIGITLVSLVVPVASGI). Residues 181-195 (YVNYRWPKQATFILK) are Cytoplasmic-facing. A helical transmembrane segment spans residues 196 to 216 (VGAAVGGMLLLVVAVTGVVLA). Residues 217–224 (KGWNIDVT) are Extracellular-facing. A helical transmembrane segment spans residues 225–245 (LLVISCIFPLVGHVMGFLLAF). At 246–265 (LTHQSWQRCRTISIETGAQN) the chain is on the cytoplasmic side. The helical transmembrane segment at 266–283 (IQLCIAMMQLSFSAEYLV) threads the bilayer. Position 284 (glutamine 284) is a topological domain, extracellular. A helical transmembrane segment spans residues 285 to 305 (LLNFALAYGLFQVLHGLLIVA). Residues 306-370 (AYQAYKRRQK…ELTSHVPSCE (65 aa)) are Cytoplasmic-facing.

Belongs to the bile acid:sodium symporter (BASS) (TC 2.A.28) family. Post-translationally, glycosylated. Highly expressed in heart, lung, spleen and adrenal gland. Moderately expressed in skeletal muscle, testis and small intestine.

The protein localises to the membrane. The catalysed reaction is estrone 3-sulfate(out) + 2 Na(+)(out) = estrone 3-sulfate(in) + 2 Na(+)(in). It carries out the reaction 17beta-estradiol 3-sulfate(out) + 2 Na(+)(out) = 17beta-estradiol 3-sulfate(in) + 2 Na(+)(in). It catalyses the reaction dehydroepiandrosterone 3-sulfate(out) + 2 Na(+)(out) = dehydroepiandrosterone 3-sulfate(in) + 2 Na(+)(in). The enzyme catalyses androst-5-ene-diol 3-sulfate(out) + 2 Na(+)(out) = androst-5-ene-diol 3-sulfate(in) + 2 Na(+)(in). The catalysed reaction is pregnenolone sulfate(out) + 2 Na(+)(out) = pregnenolone sulfate(in) + 2 Na(+)(in). It carries out the reaction taurolithocholate 3-sulfate(out) + 2 Na(+)(out) = taurolithocholate 3-sulfate(in) + 2 Na(+)(in). It catalyses the reaction androsterone 3alpha-sulfate(out) + 2 Na(+)(out) = androsterone 3alpha-sulfate(in) + 2 Na(+)(in). The enzyme catalyses 5alpha-dihydrotestosterone sulfate(out) + 2 Na(+)(out) = 5alpha-dihydrotestosterone sulfate(in) + 2 Na(+)(in). The catalysed reaction is 17beta-estradiol 17-sulfate(out) + 2 Na(+)(out) = 17beta-estradiol 17-sulfate(in) + 2 Na(+)(in). It carries out the reaction 17alpha-hydroxypregnenolone 3-sulfate(out) + 2 Na(+)(out) = 17alpha-hydroxypregnenolone 3-sulfate(in) + 2 Na(+)(in). It catalyses the reaction epiandrosterone 3-sulfate(out) + 2 Na(+)(out) = epiandrosterone 3-sulfate(in) + 2 Na(+)(in). The enzyme catalyses epitestosterone 17-sulfate(out) + 2 Na(+)(out) = epitestosterone 17-sulfate(in) + 2 Na(+)(in). The catalysed reaction is testosterone 17-sulfate(out) + 2 Na(+)(out) = testosterone 17-sulfate(in) + 2 Na(+)(in). It carries out the reaction 16alpha-hydroxydehydroepiandrosterone 3-sulfate(out) + 2 Na(+)(out) = 16alpha-hydroxydehydroepiandrosterone 3-sulfate(in) + 2 Na(+)(in). Functionally, transports sulfoconjugated steroid hormones from the extracellular compartment into the cytosol in a sodium-dependent manner without hydrolysis. Steroid sulfate hormones are commonly considered to be biologically inactive metabolites, that may be activated by steroid sulfatases into free steroids. May play an important role by delivering sulfoconjugated steroids to specific target cells in reproductive organs. May play a role transporting the estriol precursor 16alpha-hydroxydehydroepiandrosterone 3-sulfate (16a-OH-DHEAS) at the fetal blood vessel endothelium. Can also transport other sulfoconjugated molecules such as taurolithocholic acid-3-sulfate and sulfoconjugated pyrenes. The polypeptide is Sodium-dependent organic anion transporter (Slc10a6) (Rattus norvegicus (Rat)).